The primary structure comprises 745 residues: AMP deaminase 1 (745 aa).

The residue at position 79 (Thr-79) is a Phosphothreonine. Phosphoserine is present on Ser-83. Tyr-214 carries the phosphotyrosine modification. Residues His-301 and His-303 each coordinate Zn(2+). Residues His-303 and 372 to 377 (KFNDKY) each bind substrate. Position 439 is a phosphoserine (Ser-439). Position 570 (His-570) interacts with Zn(2+). Position 573 (Glu-573) interacts with substrate. His-592 functions as the Proton acceptor in the catalytic mechanism. Zn(2+) is bound at residue Asp-647. Position 648–651 (648–651 (DPMQ)) interacts with substrate.

Belongs to the metallo-dependent hydrolases superfamily. Adenosine and AMP deaminases family. Homotetramer. The cofactor is Zn(2+).

It carries out the reaction AMP + H2O + H(+) = IMP + NH4(+). It functions in the pathway purine metabolism; IMP biosynthesis via salvage pathway; IMP from AMP: step 1/1. In terms of biological role, AMP deaminase plays a critical role in energy metabolism. The sequence is that of AMP deaminase 1 from Mus musculus (Mouse).